We begin with the raw amino-acid sequence, 59 residues long: Protein translocase subunit SecE (59 aa).

A helical transmembrane segment spans residues 39–59 (VMALFLGLIDALFVALLSFFF).

It belongs to the SecE/SEC61-gamma family. Component of the Sec protein translocase complex. Heterotrimer consisting of SecY, SecE and SecG subunits. The heterotrimers can form oligomers, although 1 heterotrimer is thought to be able to translocate proteins. Interacts with the ribosome. Interacts with SecDF, and other proteins may be involved. Interacts with SecA.

Its subcellular location is the cell inner membrane. In terms of biological role, essential subunit of the Sec protein translocation channel SecYEG. Clamps together the 2 halves of SecY. May contact the channel plug during translocation. The protein is Protein translocase subunit SecE of Treponema pallidum (strain Nichols).